The sequence spans 335 residues: DNA-directed RNA polymerase subunit alpha (335 aa).

The interval 1-233 is alpha N-terminal domain (alpha-NTD); the sequence is MIRDKISVSI…DLFIPFLHGE (233 aa). Residues 264 to 335 form an alpha C-terminal domain (alpha-CTD) region; the sequence is KEKIAFKHIF…KRFAIDPPRN (72 aa).

The protein belongs to the RNA polymerase alpha chain family. In terms of assembly, in plastids the minimal PEP RNA polymerase catalytic core is composed of four subunits: alpha, beta, beta', and beta''. When a (nuclear-encoded) sigma factor is associated with the core the holoenzyme is formed, which can initiate transcription.

It localises to the plastid. Its subcellular location is the chloroplast. It carries out the reaction RNA(n) + a ribonucleoside 5'-triphosphate = RNA(n+1) + diphosphate. DNA-dependent RNA polymerase catalyzes the transcription of DNA into RNA using the four ribonucleoside triphosphates as substrates. The polypeptide is DNA-directed RNA polymerase subunit alpha (Pinus koraiensis (Korean pine)).